We begin with the raw amino-acid sequence, 153 residues long: Transcriptional repressor NrdR (153 aa).

The segment at 3–34 is a zinc-finger region; the sequence is CPYCGYEDSKVIDTRPADEGRTIKRRRECLKC. The ATP-cone domain occupies 49-139; the sequence is ILVIKKDNRR…VYRQFKDINT (91 aa).

This sequence belongs to the NrdR family. Requires Zn(2+) as cofactor.

In terms of biological role, negatively regulates transcription of bacterial ribonucleotide reductase nrd genes and operons by binding to NrdR-boxes. This chain is Transcriptional repressor NrdR, found in Caldicellulosiruptor saccharolyticus (strain ATCC 43494 / DSM 8903 / Tp8T 6331).